Here is a 549-residue protein sequence, read N- to C-terminus: Glucose-6-phosphate isomerase (549 aa).

Glu355 serves as the catalytic Proton donor. Residues His386 and Lys514 contribute to the active site.

This sequence belongs to the GPI family.

The protein localises to the cytoplasm. It carries out the reaction alpha-D-glucose 6-phosphate = beta-D-fructose 6-phosphate. It functions in the pathway carbohydrate biosynthesis; gluconeogenesis. Its pathway is carbohydrate degradation; glycolysis; D-glyceraldehyde 3-phosphate and glycerone phosphate from D-glucose: step 2/4. Functionally, catalyzes the reversible isomerization of glucose-6-phosphate to fructose-6-phosphate. The protein is Glucose-6-phosphate isomerase of Edwardsiella ictaluri (strain 93-146).